Consider the following 124-residue polypeptide: Small ribosomal subunit protein uS12c (124 aa).

A disordered region spans residues 1–28 (MPTFQQLVRSARKPHAKKTKSPALQGCP). Residues 10 to 20 (SARKPHAKKTK) show a composition bias toward basic residues.

The protein belongs to the universal ribosomal protein uS12 family. In terms of assembly, part of the 30S ribosomal subunit.

Its subcellular location is the plastid. In terms of biological role, with S4 and S5 plays an important role in translational accuracy. Located at the interface of the 30S and 50S subunits. This Prototheca wickerhamii protein is Small ribosomal subunit protein uS12c (rps12).